A 356-amino-acid chain; its full sequence is Histidinol-phosphate aminotransferase (356 aa).

N6-(pyridoxal phosphate)lysine is present on K208.

The protein belongs to the class-II pyridoxal-phosphate-dependent aminotransferase family. Histidinol-phosphate aminotransferase subfamily. In terms of assembly, homodimer. The cofactor is pyridoxal 5'-phosphate.

It catalyses the reaction L-histidinol phosphate + 2-oxoglutarate = 3-(imidazol-4-yl)-2-oxopropyl phosphate + L-glutamate. The protein operates within amino-acid biosynthesis; L-histidine biosynthesis; L-histidine from 5-phospho-alpha-D-ribose 1-diphosphate: step 7/9. The sequence is that of Histidinol-phosphate aminotransferase from Lactococcus lactis subsp. cremoris (strain MG1363).